Reading from the N-terminus, the 381-residue chain is E3 ubiquitin-protein ligase Fancl (381 aa).

A UBC-RWD region (URD) region spans residues 110–293 (NIYYDILALY…MFDLCYFPMP (184 aa)). An RING-CH-type; degenerate zinc finger spans residues 303 to 374 (EEDNEELRCN…PFCKAKLSTS (72 aa)). Zn(2+)-binding residues include C311, C314, C329, C334, H339, C342, C364, and C367.

In terms of assembly, interacts (via C-terminus) with FANCI and Fancd2.

It localises to the nucleus. The catalysed reaction is S-ubiquitinyl-[E2 ubiquitin-conjugating enzyme]-L-cysteine + [acceptor protein]-L-lysine = [E2 ubiquitin-conjugating enzyme]-L-cysteine + N(6)-ubiquitinyl-[acceptor protein]-L-lysine.. It participates in protein modification; protein ubiquitination. Functionally, ubiquitin ligase protein that mediates monoubiquitination of Fancd2. Ubiquitination of Fancd2 is stimulated by ionising radiation. Together with Fancd2, and probably FANCI, involved in DNA repair of damage caused by agents that induce interstrand cross-links but not agents that cause double strand breaks. This is E3 ubiquitin-protein ligase Fancl from Drosophila melanogaster (Fruit fly).